Reading from the N-terminus, the 431-residue chain is Glutamate-1-semialdehyde 2,1-aminomutase (431 aa).

Lys-269 carries the post-translational modification N6-(pyridoxal phosphate)lysine.

The protein belongs to the class-III pyridoxal-phosphate-dependent aminotransferase family. HemL subfamily. As to quaternary structure, homodimer. It depends on pyridoxal 5'-phosphate as a cofactor.

The protein resides in the cytoplasm. It carries out the reaction (S)-4-amino-5-oxopentanoate = 5-aminolevulinate. Its pathway is porphyrin-containing compound metabolism; protoporphyrin-IX biosynthesis; 5-aminolevulinate from L-glutamyl-tRNA(Glu): step 2/2. It functions in the pathway porphyrin-containing compound metabolism; chlorophyll biosynthesis. This chain is Glutamate-1-semialdehyde 2,1-aminomutase, found in Chlorobaculum tepidum (strain ATCC 49652 / DSM 12025 / NBRC 103806 / TLS) (Chlorobium tepidum).